The following is a 1068-amino-acid chain: Integrator complex subunit 3 homolog (1068 aa).

Disordered regions lie at residues 916-939 (YPSS…STPS) and 1001-1068 (VGRR…NDSD). Phosphoserine is present on residues S1038, S1039, S1043, and S1044.

The protein belongs to the Integrator subunit 3 family. Belongs to the multiprotein complex Integrator, at least composed of IntS1, IntS2, IntS3, IntS4, omd/IntS5, IntS6, defl/IntS7, IntS8, IntS9, IntS10, IntS11, IntS12, asun/IntS13, IntS14 and IntS15. The core complex associates with protein phosphatase 2A subunits mts/PP2A and Pp2A-29B, to form the Integrator-PP2A (INTAC) complex.

The protein localises to the nucleus. The protein resides in the cytoplasm. Its function is as follows. Component of the integrator complex, a multiprotein complex that terminates RNA polymerase II (Pol II) transcription in the promoter-proximal region of genes. The integrator complex provides a quality checkpoint during transcription elongation by driving premature transcription termination of transcripts that are unfavorably configured for transcriptional elongation: the complex terminates transcription by (1) catalyzing dephosphorylation of the C-terminal domain (CTD) of Pol II subunit Polr2A/Rbp1 and Spt5, and (2) degrading the exiting nascent RNA transcript via endonuclease activity. The integrator complex is also involved in the 3'-end processing of the U7 snRNA, and also the spliceosomal snRNAs U1, U2, U4 and U5. The chain is Integrator complex subunit 3 homolog (IntS3) from Drosophila sechellia (Fruit fly).